An 80-amino-acid polypeptide reads, in one-letter code: MATPTQTPTKAPEEPDPFYYDYNTVQTVGMTLATILFLLGILIVISKKVKCRKADSRSESPTCKSCKSELPSSAPGGGGV.

Residues 1-23 are Extracellular-facing; it reads MATPTQTPTKAPEEPDPFYYDYN. O-linked (GlcNAc) threonine glycans are attached at residues threonine 3, threonine 5, and threonine 9. A helical membrane pass occupies residues 24-46; it reads TVQTVGMTLATILFLLGILIVIS. Residues 47–80 lie on the Cytoplasmic side of the membrane; sequence KKVKCRKADSRSESPTCKSCKSELPSSAPGGGGV. The interval 54-80 is disordered; that stretch reads ADSRSESPTCKSCKSELPSSAPGGGGV. Serine 73 carries the phosphoserine modification.

The protein belongs to the FXYD family. As to quaternary structure, regulatory subunit of the sodium/potassium-transporting ATPase which is composed of a catalytic alpha subunit, a non-catalytic beta subunit and a FXYD regulatory unit that modulates the enzymatic activity in a tissue- and isoform-specific way by changing affinities of the Na+/K+-ATPase toward Na(+), K(+) or ATP. Post-translationally, O-glycosylated; required for stabilization and translocation to the plasma membrane.

It localises to the cell membrane. Its function is as follows. Associates with and regulates the activity of the sodium/potassium-transporting ATPase (NKA) which catalyzes the hydrolysis of ATP coupled with the exchange of Na(+) and K(+) ions across the plasma membrane. Reduces the apparent affinity for external K(+), an effect that depends on the presence of external Na(+) and voltage. Increases the apparent affinity for intracellular Na(+). This Homo sapiens (Human) protein is FXYD domain-containing ion transport regulator 7 (FXYD7).